We begin with the raw amino-acid sequence, 638 residues long: Threonine--tRNA ligase (638 aa).

The TGS domain maps to 1 to 61 (MPVITLPDGS…SVDGKLQIIT (61 aa)). The interval 243 to 534 (DHRKIGKTQD…LTEEYAGFFP (292 aa)) is catalytic. Cysteine 334, histidine 385, and histidine 511 together coordinate Zn(2+).

The protein belongs to the class-II aminoacyl-tRNA synthetase family. In terms of assembly, homodimer. Zn(2+) is required as a cofactor.

The protein localises to the cytoplasm. It carries out the reaction tRNA(Thr) + L-threonine + ATP = L-threonyl-tRNA(Thr) + AMP + diphosphate + H(+). In terms of biological role, catalyzes the attachment of threonine to tRNA(Thr) in a two-step reaction: L-threonine is first activated by ATP to form Thr-AMP and then transferred to the acceptor end of tRNA(Thr). Also edits incorrectly charged L-seryl-tRNA(Thr). This is Threonine--tRNA ligase from Hamiltonella defensa subsp. Acyrthosiphon pisum (strain 5AT).